A 214-amino-acid polypeptide reads, in one-letter code: ATP synthase subunit a (214 aa).

The next 6 membrane-spanning stretches (helical) occupy residues 9-29 (LDGM…VFMI), 64-84 (IMMV…TYGI), 88-108 (LWVN…SGYI), 121-141 (SGAP…SIMI), 150-170 (LVAN…VLSS), and 182-202 (LIMV…AYIF).

It belongs to the ATPase A chain family. As to quaternary structure, F-type ATPases have 2 components, CF(1) - the catalytic core - and CF(0) - the membrane proton channel. CF(1) has five subunits: alpha(3), beta(3), gamma(1), delta(1), epsilon(1). CF(0) has three main subunits: a, b and c.

It is found in the mitochondrion inner membrane. Functionally, mitochondrial membrane ATP synthase (F(1)F(0) ATP synthase or Complex V) produces ATP from ADP in the presence of a proton gradient across the membrane which is generated by electron transport complexes of the respiratory chain. F-type ATPases consist of two structural domains, F(1) - containing the extramembraneous catalytic core and F(0) - containing the membrane proton channel, linked together by a central stalk and a peripheral stalk. During catalysis, ATP synthesis in the catalytic domain of F(1) is coupled via a rotary mechanism of the central stalk subunits to proton translocation. Key component of the proton channel; it may play a direct role in the translocation of protons across the membrane. This chain is ATP synthase subunit a (ATP6), found in Albinaria caerulea (Land snail).